Reading from the N-terminus, the 420-residue chain is MPVRVSEFSWQQTPAALFLSLPLRGVCVRDADVFCGESYLKVNFPPFLFEVFLYAPIDDGKSKAKIGNDTILFTLYKKEPVLWESLSMPGVDKEMMQRIREKSILQAQEKAKEATEAKAAAKREDQRYALGEMMKIEEEERKKIEDMKENERKKATRELEAWKECQKKADGQKRVQRKEKPLQGKQAEERGALKPQSLPRKAPPTRLPTRGRNWENIFSEKLKEDRVPAPRSAGSIQISFTPRVFPTALRESQVAEEEEWLHKQAEARRAMSTDLPEFSDLKEEEKNPDWLKDKGNKLFATENYLAAIDAYNLAIRLNRKIPVLYLNRAACHLKLKNLHKAIEDSSKALELLTPPVADNANARMKAHVRRGTAFCQLELYVEGLQDYEAALKIDPANTVVQNDAEKIRNIIQGTTLKSHD.

In terms of domain architecture, CS spans 3–87 (VRVSEFSWQQ…KEPVLWESLS (85 aa)). Positions 7–103 (EFSWQQTPAA…EMMQRIREKS (97 aa)) are mediates interaction with ESR1 and STUB1. A compositionally biased stretch (basic and acidic residues) spans 165 to 192 (CQKKADGQKRVQRKEKPLQGKQAEERGA). The disordered stretch occupies residues 165-212 (CQKKADGQKRVQRKEKPLQGKQAEERGALKPQSLPRKAPPTRLPTRGR). TPR repeat units lie at residues 288 to 321 (PDWL…NRKI), 323 to 355 (VLYL…LTPP), and 364 to 397 (MKAH…DPAN).

Interacts with ZMYND10. Interacts with STUB1. Interacts with ESR1 and ESR2. Interacts with DNAAF2. Interacts with CCT3, CCT4, CCT5 and CCT8. Interacts with DNAAF6/PIH1D3.

The protein resides in the nucleus. Its subcellular location is the cytoplasm. The protein localises to the cell projection. It is found in the neuron projection. It localises to the dynein axonemal particle. Its function is as follows. Involved in neuronal migration during development of the cerebral neocortex. May regulate the stability and proteasomal degradation of the estrogen receptors that play an important role in neuronal differentiation, survival and plasticity. Axonemal dynein assembly factor required for ciliary motility. This Rattus norvegicus (Rat) protein is Dynein axonemal assembly factor 4.